Here is a 566-residue protein sequence, read N- to C-terminus: Solute carrier family 2, facilitated glucose transporter member 9 (566 aa).

The disordered stretch occupies residues 1–31 (MARKQNRNSKELGLAPLADDTSHAGPPGPGR). At 1–51 (MARKQNRNSKELGLAPLADDTSHAGPPGPGRALLECDHLRSGLPDGRRRKD) the chain is on the cytoplasmic side. The residue at position 9 (Ser9) is a Phosphoserine. The helical transmembrane segment at 52 to 72 (WSCSLLVASLAGAFGSSFLYG) threads the bilayer. The Extracellular segment spans residues 73 to 107 (YNLSVVNAPTPYIKAFYNESWERRHGRPIDPDTLT). N-linked (GlcNAc...) asparagine glycans are attached at residues Asn74 and Asn90. A helical transmembrane segment spans residues 108–128 (LLWSVTVSIFAIGGLVGTLMV). The Cytoplasmic portion of the chain corresponds to 129 to 140 (KMIGKVLGRKHT). A helical transmembrane segment spans residues 141–161 (LLANNGFAISAALLMACSLQA). Residues 162-171 (GAFEMLIVGR) lie on the Extracellular side of the membrane. Residues 172–192 (FIMGIDGGIALSVLPMYLSEI) form a helical membrane-spanning segment. Residues 193-200 (SPKEIRGS) are Cytoplasmic-facing. The chain crosses the membrane as a helical span at residues 201 to 221 (LGQVTAIFICIGVFTGQLLGL). Residues 222 to 231 (PELLGKESTW) are Extracellular-facing. Residues 232–252 (PYLFGVIVVPAVVQLLSLPFL) form a helical membrane-spanning segment. At 253-316 (PDSPRYLLLE…LRAPYVRWQV (64 aa)) the chain is on the cytoplasmic side. The chain crosses the membrane as a helical span at residues 317-337 (VTVIVTMACYQLCGLNAIWFY). The Extracellular segment spans residues 338–354 (TNSIFGKAGIPPAKIPY). The chain crosses the membrane as a helical span at residues 355–375 (VTLSTGGIETLAAIFSGLVIE). The Cytoplasmic portion of the chain corresponds to 376-381 (HLGRRP). A helical transmembrane segment spans residues 382–402 (LLIGGFGLMALFFGTLTVTLT). The Extracellular portion of the chain corresponds to 403-415 (LQDRAPWVPYLSI). The helical transmembrane segment at 416 to 436 (VGILAIIASFCSGPGGIPFIL) threads the bilayer. Over 437 to 451 (TGEFFQQSQRPAAFI) the chain is Cytoplasmic. Residues 452–472 (IAGTVNWLSNFAVGLLFPFIQ) traverse the membrane as a helical segment. The Extracellular segment spans residues 473–478 (KSLDTY). The chain crosses the membrane as a helical span at residues 479–499 (CFLVFATICMTGAIYLYFVLP). The Cytoplasmic portion of the chain corresponds to 500–566 (ETKNRTYAEI…YMDDLTFQET (67 aa)). Ser514 carries the phosphoserine modification. Over residues 524-539 (EKIDSAVTDGKTKGRP) the composition is skewed to basic and acidic residues. The segment at 524–543 (EKIDSAVTDGKTKGRPEQVS) is disordered.

It belongs to the major facilitator superfamily. Sugar transporter (TC 2.A.1.1) family.

The protein resides in the basolateral cell membrane. It localises to the apical cell membrane. It catalyses the reaction urate(out) = urate(in). In terms of biological role, high-capacity urate transporter, which may play a role in the urate reabsorption by proximal tubules. May have a residual high-affinity, low-capacity glucose and fructose transporter activity. Transports urate at rates 45- to 60-fold faster than glucose. Does not transport galactose. May mediate small uptake of adenine but not of other nucleobases. In Pongo abelii (Sumatran orangutan), this protein is Solute carrier family 2, facilitated glucose transporter member 9.